A 631-amino-acid chain; its full sequence is MFKKAFQILQQLGRALMTPVAVLPAAGLLLRFGDKDLLNIPIIKDAGGVVFDNLPLIFAVGVAIGLAGGEGVAGLAAVIGYLILTVTLDNMGKLLGLQPPYEGAEHLIDMGVFGGIIIGLLAAYLYKRFSSIELHPVLGFFSGKRFVPIITSVSSLVIGVIFSFVWPLIQNGINAASSLIADSTVGLFFYATIYRLLIPFGLHHIFYTPFYFMMGEYTDPSTGNTVTGDLTRFFAGDPTAGRFMMGDFPYMIFCLPAVALAIIHTARPEKKKMISGVMISAALTSMLTGITEPVEFSFLFVAPVLYLINSILAGVIFVVCDLFHVRHGYTFSGGGIDYVLNYGLSTNGWVVIPVGIVFAFIYYYLFRFAILKWNLKTPGRETDEDGQNEEKAPVAKDQLAFHVLQALGGQQNIANLDACITRLRVTVHQPSQVCKDELKRLGAVGVLEVNNNFQAIFGTKSDALKDDIKTIMAGGVPATAAALDTVTDKPLKPDSDETFIYPIKGETVSLGDVPDQVFSEKMMGEGFAIIPSEGKVVAPADGEIVSIFPTKHAIGFMSAGGTEILIHVGIDTVKLNGEGFEAHVTSGQAVKQGELLLTFDLNYIKQHAASAITPVIFTNTSEEDLKHIQMK.

In terms of domain architecture, PTS EIIC type-1 spans 3–382; that stretch reads KKAFQILQQL…WNLKTPGRET (380 aa). The next 8 membrane-spanning stretches (helical) occupy residues 12–32, 56–76, 106–126, 149–169, 196–216, 243–263, 298–318, and 350–370; these read LGRALMTPVAVLPAAGLLLRF, LIFAVGVAIGLAGGEGVAGLA, HLIDMGVFGGIIIGLLAAYLY, IITSVSSLVIGVIFSFVWPLI, LLIPFGLHHIFYTPFYFMMGE, FMMGDFPYMIFCLPAVALAII, FLFVAPVLYLINSILAGVIFV, and VVIPVGIVFAFIYYYLFRFAI. Positions 397-478 constitute a PTS EIIB type-1 domain; the sequence is DQLAFHVLQA…KTIMAGGVPA (82 aa). The Phosphocysteine intermediate; for EIIB activity role is filled by C419. At C419 the chain carries Phosphocysteine. The 105-residue stretch at 515–619 folds into the PTS EIIA type-1 domain; sequence DQVFSEKMMG…SAITPVIFTN (105 aa). The active-site Tele-phosphohistidine intermediate; for EIIA activity is H567. Phosphohistidine is present on H567.

It localises to the cell membrane. It catalyses the reaction D-glucosamine(out) + N(pros)-phospho-L-histidyl-[protein] = D-glucosamine 6-phosphate(in) + L-histidyl-[protein]. Its function is as follows. The phosphoenolpyruvate-dependent sugar phosphotransferase system (sugar PTS), a major carbohydrate active transport system, catalyzes the phosphorylation of incoming sugar substrates concomitantly with their translocation across the cell membrane. This system is involved in glucosamine transport. In vitro, when expressed in the absence of GamR and NagP, can transport N-acetylglucosamine. In addition, plays an important role in the phosphorylation of EIIA-deficient PTS transporters. The EIIA domain can transfer a phosphoryl group to EIIA-deficient PTS transporters, enabling growth with maltose, N-acetylglucosamine, sucrose or trehalose as the sole carbon source. The protein is PTS system glucosamine-specific EIICBA component of Bacillus subtilis (strain 168).